The primary structure comprises 92 residues: Small ribosomal subunit protein uS19c (92 aa).

This sequence belongs to the universal ribosomal protein uS19 family.

It localises to the plastid. Its subcellular location is the chloroplast. Its function is as follows. Protein S19 forms a complex with S13 that binds strongly to the 16S ribosomal RNA. This Pinus thunbergii (Japanese black pine) protein is Small ribosomal subunit protein uS19c (rps19).